An 829-amino-acid chain; its full sequence is Isethionate sulfite-lyase (829 aa).

A PFL domain is found at 31–699 (ERVFNILDSF…VVSATPNGRL (669 aa)). 2-hydroxyethane-1-sulfonate contacts are provided by residues R188, Q192, 467-469 (CTE), and R677. C467 acts as the Cysteine radical intermediate in catalysis. E469 (proton acceptor) is an active-site residue. The Glycine radical domain occupies 706–829 (DGSSASHGAD…LIARTQHDAM (124 aa)). A Glycine radical modification is found at G804.

Belongs to the glycyl radical enzyme (GRE) family. As to quaternary structure, homodimer. Requires the activating protein IslB to generate the key active site glycyl radical on Gly-804 that is involved in catalysis.

The catalysed reaction is 2-hydroxyethane-1-sulfonate = acetaldehyde + sulfite + H(+). It functions in the pathway organosulfur degradation; alkanesulfonate degradation. Functionally, involved in an anaerobic respiration pathway that converts the sulfonate isethionate (2-hydroxyethanesulfonate) to ammonia, acetate and sulfide. Catalyzes the radical-mediated C-S bond cleavage of isethionate (2-hydroxyethanesulfonate) to form sulfite and acetaldehyde. This Oleidesulfovibrio alaskensis (strain ATCC BAA-1058 / DSM 17464 / G20) (Desulfovibrio alaskensis) protein is Isethionate sulfite-lyase.